The following is a 161-amino-acid chain: Putative acetyltransferase SAV0762 (161 aa).

This sequence belongs to the transferase hexapeptide repeat family.

The protein is Putative acetyltransferase SAV0762 of Staphylococcus aureus (strain Mu50 / ATCC 700699).